The primary structure comprises 192 residues: MITISDAAQAHFVKLLADQPEGTHIRVFVISPGTAQAECGVSYCPPDAVESDDIELAFNGFSAMVDEKSAPFLEEASIDFVTDQLGSQLTLKAPNAKMRKVAGDAPLVERIEYVIQSEINPQLASHGGNIMLVEITGEGVAVLQFGGGCNGCSQVDITLKDGIEKQLLDMFPGELTGVRDVTDHQHGEHSYA.

Positions 149 and 152 each coordinate [4Fe-4S] cluster.

It belongs to the NfuA family. Homodimer. It depends on [4Fe-4S] cluster as a cofactor.

Involved in iron-sulfur cluster biogenesis. Binds a 4Fe-4S cluster, can transfer this cluster to apoproteins, and thereby intervenes in the maturation of Fe/S proteins. Could also act as a scaffold/chaperone for damaged Fe/S proteins. The protein is Fe/S biogenesis protein NfuA of Shewanella oneidensis (strain ATCC 700550 / JCM 31522 / CIP 106686 / LMG 19005 / NCIMB 14063 / MR-1).